The following is a 171-amino-acid chain: NADH-ubiquinone oxidoreductase chain 6 (171 aa).

5 helical membrane passes run 1–21 (MYVM…ISSK), 25–44 (IYGG…IIMG), 49–71 (FMGL…YTTA), 85–105 (VVIW…VAWM), and 150–170 (WFAA…IEII).

The protein belongs to the complex I subunit 6 family. As to quaternary structure, core subunit of respiratory chain NADH dehydrogenase (Complex I) which is composed of 45 different subunits.

Its subcellular location is the mitochondrion inner membrane. The enzyme catalyses a ubiquinone + NADH + 5 H(+)(in) = a ubiquinol + NAD(+) + 4 H(+)(out). Functionally, core subunit of the mitochondrial membrane respiratory chain NADH dehydrogenase (Complex I) which catalyzes electron transfer from NADH through the respiratory chain, using ubiquinone as an electron acceptor. Essential for the catalytic activity and assembly of complex I. The chain is NADH-ubiquinone oxidoreductase chain 6 (MT-ND6) from Lemur catta (Ring-tailed lemur).